We begin with the raw amino-acid sequence, 172 residues long: Exocyst complex component 1-like (172 aa).

The protein is Exocyst complex component 1-like of Mus musculus (Mouse).